A 1339-amino-acid polypeptide reads, in one-letter code: DNA polymerase alpha catalytic subunit (1339 aa).

2 disordered regions span residues 1 to 90 and 177 to 203; these read MSGG…SMSD and NVER…GYRN. Positions 27-36 are enriched in basic and acidic residues; it reads DQWRSLREEV. Residues 79-89 are compositionally biased toward polar residues; sequence PKQQTLAQSMS. Residues C1179, C1182, C1213, C1216, C1233, C1243, C1271, and C1286 each coordinate Zn(2+). The CysA-type zinc finger occupies 1179 to 1216; it reads CTHCRLMTPINPHTRVMEVLADQERQRDRFDLYVCVSC. Residues 1243–1271 carry the CysB motif motif; it reads CGSAAAVKAVRTQFTYYRALFDVPHAPGC.

It belongs to the DNA polymerase type-B family.

Its subcellular location is the nucleus. It catalyses the reaction DNA(n) + a 2'-deoxyribonucleoside 5'-triphosphate = DNA(n+1) + diphosphate. In terms of biological role, polymerase alpha in a complex with DNA primase is a replicative polymerase. The chain is DNA polymerase alpha catalytic subunit from Leishmania donovani.